Reading from the N-terminus, the 700-residue chain is ABC transporter B family member 26, chloroplastic (700 aa).

The N-terminal 59 residues, 1 to 59 (MAQQVLGCTSRPIRVSLHRCSVITTSDTIRRKNLRFVRNPRLSFSLQSSTRNYRLPSIN), are a transit peptide targeting the chloroplast. 3 helical membrane-spanning segments follow: residues 137-157 (WVIF…ITIP), 182-202 (LVTL…FFGI), and 268-288 (LIYL…ICCI). Residues 139 to 421 (IFAAFSTLIV…VGDNLSSLMQ (283 aa)) enclose the ABC transmembrane type-1 domain. The ABC transporter domain occupies 455-694 (IEFVDVSFSY…DGLYARLTKR (240 aa)). Residue 490-497 (GLSGSGKS) coordinates ATP.

Belongs to the ABC transporter superfamily. ABCB family. Multidrug resistance exporter (TC 3.A.1.201) subfamily.

The protein resides in the plastid. The protein localises to the chloroplast membrane. In Arabidopsis thaliana (Mouse-ear cress), this protein is ABC transporter B family member 26, chloroplastic (ABCB26).